We begin with the raw amino-acid sequence, 438 residues long: Porin AaxA (438 aa).

The N-terminal stretch at 1 to 21 (MISFRFLLLSGLCALGISSYA) is a signal peptide.

This sequence belongs to the OprB family.

The protein resides in the cell outer membrane. Functionally, facilitates L-arginine uptake, as part of the AaxABC system. The arginine uptake by the bacterium in the macrophage may be a virulence factor against the host innate immune response. This Chlamydia pneumoniae (Chlamydophila pneumoniae) protein is Porin AaxA (aaxA).